A 1363-amino-acid polypeptide reads, in one-letter code: Spike glycoprotein (1363 aa).

A signal peptide spans 1-13; that stretch reads MFLILLISLPTAF. At 14–1307 the chain is on the extracellular side; the sequence is AVIGDLKCTT…GTYEYYVKWP (1294 aa). In terms of domain architecture, BetaCoV S1-NTD spans 15-298; that stretch reads VIGDLKCTTV…DFMSEIKCKT (284 aa). Disulfide bonds link Cys-21/Cys-165, Cys-160/Cys-193, Cys-172/Cys-252, Cys-286/Cys-296, and Cys-331/Cys-356. 2 N-linked (GlcNAc...) asparagine; by host glycosylation sites follow: Asn-59 and Asn-133. The N-linked (GlcNAc...) asparagine; by host glycan is linked to Asn-198. The BetaCoV S1-CTD domain maps to 329–617; that stretch reads PDCNIEAWLN…DVNSGTTCST (289 aa). Asn-359 is a glycosylation site (N-linked (GlcNAc...) asparagine; by host). Disulfide bonds link Cys-374–Cys-427 and Cys-386–Cys-615. Asn-437, Asn-649, Asn-676, Asn-696, Asn-714, Asn-739, and Asn-788 each carry an N-linked (GlcNAc...) asparagine; by host glycan. Fusion peptide stretches follow at residues 914 to 935 and 933 to 953; these read SAIE…VEAY and EAYN…VQSY. Residue Asn-937 is glycosylated (N-linked (GlcNAc...) asparagine; by host). A disulfide bridge connects residues Cys-938 and Cys-949. A heptad repeat 1 region spans residues 1014-1064; that stretch reads QKLIANAFNNALGAIQEGFDATNSALVKIQAVVNANAETLNNLLQQLSNRF. Residues 1043–1087 are a coiled coil; it reads QAVVNANAETLNNLLQQLSNRFGAISSSLQEILSRLDALEAQAQI. Asn-1194, Asn-1224, Asn-1234, Asn-1253, Asn-1267, and Asn-1288 each carry an N-linked (GlcNAc...) asparagine; by host glycan. Residues 1258-1296 form a heptad repeat 2 region; it reads APDLSLDYINVTFLDLQDEMNRLQEAIKVLNQSYINLKD. Residues 1269 to 1297 are a coiled coil; sequence TFLDLQDEMNRLQEAIKVLNQSYINLKDI. A helical transmembrane segment spans residues 1308-1328; the sequence is WYVWLLIGFAGVAMLVLLFFI. The Cytoplasmic portion of the chain corresponds to 1329–1363; the sequence is CCCTGCGTSCFKKCGGCCDDYTGHQELVIKTSHED. The KxHxx signature appears at 1359–1363; sequence TSHED.

The protein belongs to the betacoronaviruses spike protein family. As to quaternary structure, homotrimer; each monomer consists of a S1 and a S2 subunit. The resulting peplomers protrude from the virus surface as spikes. Post-translationally, specific enzymatic cleavages in vivo yield mature proteins. The precursor is processed into S1 and S2 by host cell furin or another cellular protease to yield the mature S1 and S2 proteins. Additionally, a second cleavage leads to the release of a fusion peptide after viral attachment to host cell receptor. In terms of processing, the cytoplasmic Cys-rich domain is palmitoylated. Spike glycoprotein is digested within host endosomes.

The protein resides in the virion membrane. It localises to the host endoplasmic reticulum-Golgi intermediate compartment membrane. It is found in the host cell membrane. Functionally, attaches the virion to the cell membrane by interacting with host receptor, initiating the infection. In terms of biological role, mediates fusion of the virion and cellular membranes by acting as a class I viral fusion protein. Under the current model, the protein has at least three conformational states: pre-fusion native state, pre-hairpin intermediate state, and post-fusion hairpin state. During viral and target cell membrane fusion, the coiled coil regions (heptad repeats) assume a trimer-of-hairpins structure, positioning the fusion peptide in close proximity to the C-terminal region of the ectodomain. The formation of this structure appears to drive apposition and subsequent fusion of viral and target cell membranes. Its function is as follows. Acts as a viral fusion peptide which is unmasked following S2 cleavage occurring upon virus endocytosis. The polypeptide is Spike glycoprotein (Bovine coronavirus (strain 98TXSF-110-LUN) (BCoV-LUN)).